Consider the following 459-residue polypeptide: Zinc finger protein ZPR1 (459 aa).

Over residues 1–29 (MSAGGAVEPGLPAAAAAPSAAPARDPGPG) the composition is skewed to low complexity. A disordered region spans residues 1–43 (MSAGGAVEPGLPAAAAAPSAAPARDPGPGHLFRPISAEDEEQQ). 2 consecutive C4-type zinc fingers follow at residues 51 to 83 (CMNC…CEHC) and 259 to 291 (CPEC…CENC). The segment at 438-459 (NEELGLNDMKTEGYETGLPAQR) is disordered.

This sequence belongs to the ZPR1 family. As to quaternary structure, component of an import snRNP complex composed of KPNB1, SNUPN, SMN1 and ZNF259. Interacts (via C-terminal region) with SMN1 (via C-terminal region); the interaction occurs after treatment with serum. Interacts with elongation factor 1-alpha EEF1A1; the interaction occurs in a epidermal growth factor (EGF)-dependent manner. Interacts (via zinc fingers) with EGFR (via C-terminal cytoplasmic kinase domain); the interaction is negatively regulated in response to epidermal growth factor (EGF) stimulation and EGFR kinase activity. May also bind to the PDGFR receptor.

The protein resides in the nucleus. The protein localises to the cytoplasm. It localises to the nucleolus. It is found in the perinuclear region. Its subcellular location is the gem. The protein resides in the cajal body. The protein localises to the cell projection. It localises to the axon. It is found in the growth cone. In terms of biological role, acts as a signaling molecule that communicates proliferative growth signals from the cytoplasm to the nucleus. Plays a role for the localization and accumulation of the survival motor neuron protein SMN1 in sub-nuclear bodies, including gems and Cajal bodies. Induces neuron differentiation and stimulates axonal growth and formation of growth cone in spinal cord motor neurons. Plays a role in the splicing of cellular pre-mRNAs. May be involved in H(2)O(2)-induced neuronal cell death. The chain is Zinc finger protein ZPR1 (ZNF259) from Bos taurus (Bovine).